The chain runs to 719 residues: Ferric reductase transmembrane component 4 (719 aa).

A signal peptide spans 1–18 (MLLVHIISFLLFFQLSAA). Topologically, residues 19 to 156 (KAPPSKTSLI…YGYYYNHDIP (138 aa)) are extracellular. N-linked (GlcNAc...) asparagine glycans are attached at residues Asn-51, Asn-80, Asn-101, Asn-113, Asn-127, and Asn-135. The chain crosses the membrane as a helical span at residues 157–177 (YYFGGIICAYFVGVMLLAGLI). Over 178–228 (RFLNYTPIKKIMFQQKLVNYVRGYTTLPTLYEKHAEPFSYLKVITGYLPTR) the chain is Cytoplasmic. A helical membrane pass occupies residues 229-249 (FETLVILGYLILHTIFMAYKY). Topologically, residues 250-267 (QYDPYHIIFAAHRAEVAH) are extracellular. Residues 268–288 (FVAYRSGILSFAHLPLIVLFA) form a helical membrane-spanning segment. The Ferric oxidoreductase domain occupies 273–407 (SGILSFAHLP…SGIEWIYAAI (135 aa)). Residues 289–304 (GRNNFLQLISGLKHTS) are Cytoplasmic-facing. A helical membrane pass occupies residues 305-325 (FIVFHKWLGRMMFLDAIIHAA). Positions 309 and 323 each coordinate heme. Topologically, residues 326-346 (GFTNYYLYYKKWNTVRLRVYW) are extracellular. A helical transmembrane segment spans residues 347-367 (KFGIATTCLAGMLIFFSIAAF). At 368–373 (RRHYYE) the chain is on the cytoplasmic side. The helical transmembrane segment at 374 to 394 (TFMALHIVFAALFLYTCWEHV) threads the bilayer. 2 residues coordinate heme: His-379 and His-393. Thr-395 is a topological domain (extracellular). A helical transmembrane segment spans residues 396-416 (NFSGIEWIYAAIAIWGVDRIV). Positions 408 to 527 (AIWGVDRIVR…EGPYGSKSTA (120 aa)) constitute an FAD-binding FR-type domain. Topologically, residues 417–719 (RITRIALLGF…IEYLEEYQAW (303 aa)) are cytoplasmic. An FAD-binding site is contributed by 472–478 (HPFTVMD). NADP(+) is bound at residue 519 to 522 (GPYG). 2 stretches are compositionally biased toward polar residues: residues 606-618 (EKISSNEVKNGET) and 625-643 (SSLSNSEKAPSESENTELP). Residues 606–643 (EKISSNEVKNGETTAEKAPSSLSNSEKAPSESENTELP) form a disordered region. Position 685-686 (685-686 (CG)) interacts with NADP(+).

This sequence belongs to the ferric reductase (FRE) family. FAD serves as cofactor.

The protein localises to the cell membrane. It carries out the reaction 2 a Fe(II)-siderophore + NADP(+) + H(+) = 2 a Fe(III)-siderophore + NADPH. Siderophore-iron reductase responsible for reducing extracellular iron prior to import. Catalyzes the reductive uptake of Fe(3+) bound to dihydroxamate rhodotorulic acid. Fe(3+) is reduced to Fe(2+), which then dissociates from the siderophore and can be imported by the high-affinity Fe(2+) transport complex in the plasma membrane. In Saccharomyces cerevisiae (strain ATCC 204508 / S288c) (Baker's yeast), this protein is Ferric reductase transmembrane component 4 (FRE4).